Consider the following 219-residue polypeptide: 2-C-methyl-D-erythritol 4-phosphate cytidylyltransferase (219 aa).

It belongs to the IspD/TarI cytidylyltransferase family. IspD subfamily.

The enzyme catalyses 2-C-methyl-D-erythritol 4-phosphate + CTP + H(+) = 4-CDP-2-C-methyl-D-erythritol + diphosphate. It participates in isoprenoid biosynthesis; isopentenyl diphosphate biosynthesis via DXP pathway; isopentenyl diphosphate from 1-deoxy-D-xylulose 5-phosphate: step 2/6. In terms of biological role, catalyzes the formation of 4-diphosphocytidyl-2-C-methyl-D-erythritol from CTP and 2-C-methyl-D-erythritol 4-phosphate (MEP). This chain is 2-C-methyl-D-erythritol 4-phosphate cytidylyltransferase, found in Chlamydia trachomatis serovar D (strain ATCC VR-885 / DSM 19411 / UW-3/Cx).